The chain runs to 361 residues: 3-dehydroquinate synthase (361 aa).

This sequence belongs to the archaeal-type DHQ synthase family.

It catalyses the reaction 2-amino-2,3,7-trideoxy-D-lyxo-hept-6-ulosonate + NAD(+) + H2O = 3-dehydroquinate + NH4(+) + NADH + H(+). Catalyzes the oxidative deamination and cyclization of 2-amino-3,7-dideoxy-D-threo-hept-6-ulosonic acid (ADH) to yield 3-dehydroquinate (DHQ), which is fed into the canonical shikimic pathway of aromatic amino acid biosynthesis. This is 3-dehydroquinate synthase from Methanococcus maripaludis (strain C7 / ATCC BAA-1331).